A 264-amino-acid chain; its full sequence is uncharacterized protein (264 aa).

Positions 1 to 21 (MMWNYFVTCIVLYANIISIHT) are cleaved as a signal peptide. The disordered stretch occupies residues 182–247 (QQPNAAQVPT…AANNGLDLTS (66 aa)). Low complexity predominate over residues 190 to 213 (PTTSQQQPTSNTGGQQPPTNASNP). An N-linked (GlcNAc...) asparagine glycan is attached at Asn209. The span at 214-226 (PTNPQPTPTPAQP) shows a compositional bias: pro residues. Residues 230-247 (GTQVQQTPAANNGLDLTS) are compositionally biased toward polar residues.

In terms of tissue distribution, component of the acid-insoluble and acid-soluble organic matrix of calcified layers of the shell (at protein level).

The protein resides in the secreted. This is an uncharacterized protein from Lottia gigantea (Giant owl limpet).